We begin with the raw amino-acid sequence, 550 residues long: Pectinesterase 2.2 (550 aa).

The N-linked (GlcNAc...) asparagine glycan is linked to asparagine 179. Positions 312 and 342 each coordinate substrate. Cysteine 331 and cysteine 358 form a disulfide bridge. The active-site Proton donor is aspartate 365. Residue aspartate 386 is the Nucleophile of the active site. A disulfide bond links cysteine 399 and cysteine 433. Positions 454 and 456 each coordinate substrate.

In the N-terminal section; belongs to the PMEI family. It in the C-terminal section; belongs to the pectinesterase family.

Its subcellular location is the secreted. The protein localises to the cell wall. It carries out the reaction [(1-&gt;4)-alpha-D-galacturonosyl methyl ester](n) + n H2O = [(1-&gt;4)-alpha-D-galacturonosyl](n) + n methanol + n H(+). It participates in glycan metabolism; pectin degradation; 2-dehydro-3-deoxy-D-gluconate from pectin: step 1/5. Functionally, pectinesterase may play a role in cell wall metabolism during fruit growth and development prior to ripening and may be required for preparing cell walls for softening by polygalacturonase during fruit ripening. This chain is Pectinesterase 2.2 (PME2.2), found in Solanum lycopersicum (Tomato).